A 121-amino-acid polypeptide reads, in one-letter code: Holo-[acyl-carrier-protein] synthase (121 aa).

Residues Asp8 and Glu55 each contribute to the Mg(2+) site.

The protein belongs to the P-Pant transferase superfamily. AcpS family. Mg(2+) is required as a cofactor.

It localises to the cytoplasm. It carries out the reaction apo-[ACP] + CoA = holo-[ACP] + adenosine 3',5'-bisphosphate + H(+). Its function is as follows. Transfers the 4'-phosphopantetheine moiety from coenzyme A to a Ser of acyl-carrier-protein. This is Holo-[acyl-carrier-protein] synthase from Caldicellulosiruptor bescii (strain ATCC BAA-1888 / DSM 6725 / KCTC 15123 / Z-1320) (Anaerocellum thermophilum).